The following is a 221-amino-acid chain: SIN3-HDAC complex-associated factor (221 aa).

A compositionally biased stretch (basic and acidic residues) spans 112 to 121; the sequence is QKEFKRHNSD. Disordered regions lie at residues 112 to 152 and 201 to 221; these read QKEF…MASG and AAAE…TQEW. Residues 124–135 show a composition bias toward low complexity; sequence STTSSASPAQSP. Polar residues predominate over residues 136-152; sequence CYSNQSDDGSDTEMASG.

Belongs to the SINHCAF family. As to quaternary structure, interacts with the Sin3/HDAC corepressor complex at least composed of BRMS1, BRMS1L, ING2, SAP30, SAP30L and HDAC1. Found in a complex composed of at least SINHCAF, SIN3A, HDAC1, SAP30, RBBP4, OGT and TET1. Interacts with SIN3A and OGT.

It localises to the nucleus. Its function is as follows. Subunit of the Sin3 deacetylase complex (Sin3/HDAC), this subunit is important for the repression of genes encoding components of the TGF-beta signaling pathway. Core component of a SIN3A complex (composed of at least SINHCAF, SIN3A, HDAC1, SAP30, RBBP4, OGT and TET1) present in embryonic stem (ES) cells. Promotes the stability of SIN3A and its presence on chromatin and is essential for maintaining the potential of ES cells to proliferate rapidly, while ensuring a short G1-phase of the cell cycle, thereby preventing premature lineage priming. The chain is SIN3-HDAC complex-associated factor from Homo sapiens (Human).